Reading from the N-terminus, the 169-residue chain is Large ribosomal subunit protein uL5 (169 aa).

It belongs to the universal ribosomal protein uL5 family. In terms of assembly, part of the 50S ribosomal subunit; contacts the 5S rRNA and probably tRNA. Forms a bridge to the 30S subunit in the 70S ribosome.

In terms of biological role, this is one of the proteins that bind and probably mediate the attachment of the 5S RNA into the large ribosomal subunit, where it forms part of the central protuberance. In the 70S ribosome it contacts protein S13 of the 30S subunit (bridge B1b), connecting the 2 subunits; this bridge is implicated in subunit movement. May contact the P site tRNA; the 5S rRNA and some of its associated proteins might help stabilize positioning of ribosome-bound tRNAs. The chain is Large ribosomal subunit protein uL5 from Nanoarchaeum equitans (strain Kin4-M).